A 490-amino-acid chain; its full sequence is Probable cytosol aminopeptidase (490 aa).

Mn(2+) is bound by residues K257 and D262. K269 is a catalytic residue. D281, D341, and E343 together coordinate Mn(2+). The active site involves R345.

The protein belongs to the peptidase M17 family. Mn(2+) is required as a cofactor.

It localises to the cytoplasm. The catalysed reaction is Release of an N-terminal amino acid, Xaa-|-Yaa-, in which Xaa is preferably Leu, but may be other amino acids including Pro although not Arg or Lys, and Yaa may be Pro. Amino acid amides and methyl esters are also readily hydrolyzed, but rates on arylamides are exceedingly low.. It carries out the reaction Release of an N-terminal amino acid, preferentially leucine, but not glutamic or aspartic acids.. Functionally, presumably involved in the processing and regular turnover of intracellular proteins. Catalyzes the removal of unsubstituted N-terminal amino acids from various peptides. The protein is Probable cytosol aminopeptidase of Prochlorococcus marinus (strain MIT 9215).